The primary structure comprises 427 residues: Synaptotagmin-A (427 aa).

Residues 1–57 (MKLTEAYHDALAALPATPPLPTAVANATEAAAGSEEGKQDGFSKVKVKEKFMNELNK) lie on the Vesicular side of the membrane. The N-linked (GlcNAc...) asparagine glycan is linked to Asn26. The helical transmembrane segment at 58-84 (IPLPPWALVAIAIVAIILGLTCCFCIC) threads the bilayer. Residues 85–427 (KKCLLKKKNK…EVDATLGMKK (343 aa)) lie on the Cytoplasmic side of the membrane. The segment at 96–145 (KGKEKGGKNAMTMKDVKEMGKSGKEQALKDEDEDAETGLTTDGKEEEKED) is disordered. A compositionally biased stretch (basic and acidic residues) spans 109–124 (KDVKEMGKSGKEQALK). The segment at 141–387 (EEKEDEKLGK…AIGKVFVGYN (247 aa)) is phospholipid binding. 2 consecutive C2 domains span residues 147–266 (KLGK…EEWR) and 278–411 (KLGD…AQWH). Ca(2+) contacts are provided by Leu177, Asp178, Asp184, Asp236, Phe237, Asp238, Ser241, Lys242, Asp244, Asp309, Asp315, Asp369, Asp371, and Asp377.

This sequence belongs to the synaptotagmin family. As to quaternary structure, homodimer or homotrimer (possible). Ca(2+) serves as cofactor. As to expression, forebrain, cerebellum and neuroendocrine cells.

The protein localises to the cytoplasmic vesicle. It localises to the secretory vesicle. Its subcellular location is the synaptic vesicle membrane. It is found in the synapse. May have a regulatory role in the membrane interactions during trafficking of synaptic vesicles at the active zone of the synapse. It binds acidic phospholipids with a specificity that requires the presence of both an acidic head group and a diacyl backbone. The sequence is that of Synaptotagmin-A (P65-A) from Diplobatis ommata (Ocellated electric ray).